Here is a 199-residue protein sequence, read N- to C-terminus: Holliday junction branch migration complex subunit RuvA (199 aa).

Residues 1–63 form a domain I region; sequence MIGCLIGEVF…EDAQQLYGFS (63 aa). Residues 64–142 are domain II; the sequence is DAQEKTIFRT…TLAQGTSSAA (79 aa). Positions 143 to 150 are flexible linker; the sequence is ALPQIQFV. Residues 150-199 are domain III; that stretch reads VSNSPVAEAEAALQSLGYKPLEAQKAVAAVKADYTESADIIRAALKSMMK.

The protein belongs to the RuvA family. As to quaternary structure, homotetramer. Forms an RuvA(8)-RuvB(12)-Holliday junction (HJ) complex. HJ DNA is sandwiched between 2 RuvA tetramers; dsDNA enters through RuvA and exits via RuvB. An RuvB hexamer assembles on each DNA strand where it exits the tetramer. Each RuvB hexamer is contacted by two RuvA subunits (via domain III) on 2 adjacent RuvB subunits; this complex drives branch migration. In the full resolvosome a probable DNA-RuvA(4)-RuvB(12)-RuvC(2) complex forms which resolves the HJ.

It is found in the cytoplasm. Functionally, the RuvA-RuvB-RuvC complex processes Holliday junction (HJ) DNA during genetic recombination and DNA repair, while the RuvA-RuvB complex plays an important role in the rescue of blocked DNA replication forks via replication fork reversal (RFR). RuvA specifically binds to HJ cruciform DNA, conferring on it an open structure. The RuvB hexamer acts as an ATP-dependent pump, pulling dsDNA into and through the RuvAB complex. HJ branch migration allows RuvC to scan DNA until it finds its consensus sequence, where it cleaves and resolves the cruciform DNA. This Acinetobacter baumannii (strain AB307-0294) protein is Holliday junction branch migration complex subunit RuvA.